The following is a 211-amino-acid chain: Putative ATP-dependent Clp protease proteolytic subunit-like (211 aa).

A disordered region spans residues 1–24; it reads MTRPSARHVLPEFTERTSAGTRTS. The active site involves histidine 129.

It belongs to the peptidase S14 family.

Its function is as follows. Has lost one of the conserved residue (Ser) proposed to be part of the active site. Therefore it could be inactive. The polypeptide is Putative ATP-dependent Clp protease proteolytic subunit-like (Streptomyces coelicolor (strain ATCC BAA-471 / A3(2) / M145)).